A 174-amino-acid polypeptide reads, in one-letter code: FMN reductase (NADH) RutF (174 aa).

This sequence belongs to the non-flavoprotein flavin reductase family. RutF subfamily.

It catalyses the reaction FMNH2 + NAD(+) = FMN + NADH + 2 H(+). Catalyzes the reduction of FMN to FMNH2 which is used to reduce pyrimidine by RutA via the Rut pathway. The sequence is that of FMN reductase (NADH) RutF from Agrobacterium fabrum (strain C58 / ATCC 33970) (Agrobacterium tumefaciens (strain C58)).